A 130-amino-acid chain; its full sequence is Small ribosomal subunit protein uS8 (130 aa).

It belongs to the universal ribosomal protein uS8 family. In terms of assembly, part of the 30S ribosomal subunit.

Functionally, one of the primary rRNA binding proteins, it binds directly to 16S rRNA central domain where it helps coordinate assembly of the platform of the 30S subunit. This Korarchaeum cryptofilum (strain OPF8) protein is Small ribosomal subunit protein uS8.